The primary structure comprises 239 residues: DUP240 protein DFP3 (239 aa).

Over 1 to 54 the chain is Cytoplasmic; that stretch reads MQPHLDNNSNNDDVKLDTLGEQNVLSSAENITLPEDTFKSYMTYLLYEMAHYKP. A helical transmembrane segment spans residues 55–75; sequence MIFSFLALSVSILIVVIFHNV. Residues 76–79 lie on the Extracellular side of the membrane; that stretch reads KACD. A helical transmembrane segment spans residues 80-104; the sequence is VVFGFSIFVTSILFLSTLIPFNVYI. Over 105–239 the chain is Cytoplasmic; the sequence is SDEGFRIKLL…RKQYPDADIP (135 aa).

This sequence belongs to the DUP/COS family. As to quaternary structure, interacts according to large scale protein interaction studies with MEC3 and ULP1.

It localises to the membrane. In Saccharomyces cerevisiae (strain ATCC 204508 / S288c) (Baker's yeast), this protein is DUP240 protein DFP3.